The primary structure comprises 308 residues: tRNA pseudouridine synthase B (308 aa).

Asp47 acts as the Nucleophile in catalysis.

The protein belongs to the pseudouridine synthase TruB family. Type 1 subfamily.

The catalysed reaction is uridine(55) in tRNA = pseudouridine(55) in tRNA. Responsible for synthesis of pseudouridine from uracil-55 in the psi GC loop of transfer RNAs. The sequence is that of tRNA pseudouridine synthase B from Xanthomonas oryzae pv. oryzae (strain MAFF 311018).